The sequence spans 142 residues: Protein OrfX1 (142 aa).

Belongs to the TULIP P47 family. In terms of assembly, orfX1 was not detected as part of a crude toxin extract that includes BoNTA2/NTNH, P47, OrfX2 and OrfX3.

Its function is as follows. Part of a botulinum neurotoxin type A2 (BoNT) locus; may be part of a progenitor toxin complex required to protect BoNT during its passage through the host gastrointestinal tract. Binds phosphatidylinositol (3,4) bisphosphate, phosphatidylethanolamine and phosphatidylserine. This is Protein OrfX1 (orfX1) from Clostridium botulinum (strain Kyoto / Type A2).